Consider the following 361-residue polypeptide: Ribosomal RNA large subunit methyltransferase M (361 aa).

S-adenosyl-L-methionine-binding positions include serine 187, cysteine 220–glycine 223, aspartate 239, aspartate 259, and aspartate 276. Lysine 305 functions as the Proton acceptor in the catalytic mechanism.

It belongs to the class I-like SAM-binding methyltransferase superfamily. RNA methyltransferase RlmE family. RlmM subfamily. As to quaternary structure, monomer.

The protein localises to the cytoplasm. It carries out the reaction cytidine(2498) in 23S rRNA + S-adenosyl-L-methionine = 2'-O-methylcytidine(2498) in 23S rRNA + S-adenosyl-L-homocysteine + H(+). In terms of biological role, catalyzes the 2'-O-methylation at nucleotide C2498 in 23S rRNA. This Shewanella sp. (strain MR-4) protein is Ribosomal RNA large subunit methyltransferase M.